Consider the following 362-residue polypeptide: Aminomethyltransferase (362 aa).

It belongs to the GcvT family. As to quaternary structure, the glycine cleavage system is composed of four proteins: P, T, L and H.

The catalysed reaction is N(6)-[(R)-S(8)-aminomethyldihydrolipoyl]-L-lysyl-[protein] + (6S)-5,6,7,8-tetrahydrofolate = N(6)-[(R)-dihydrolipoyl]-L-lysyl-[protein] + (6R)-5,10-methylene-5,6,7,8-tetrahydrofolate + NH4(+). Its function is as follows. The glycine cleavage system catalyzes the degradation of glycine. This Porphyromonas gingivalis (strain ATCC 33277 / DSM 20709 / CIP 103683 / JCM 12257 / NCTC 11834 / 2561) protein is Aminomethyltransferase.